We begin with the raw amino-acid sequence, 276 residues long: Pyridinium-3,5-bisthiocarboxylic acid mononucleotide synthase (276 aa).

The active-site Nucleophile and sulfur donor is the C176. C176 carries the post-translational modification 2,3-didehydroalanine (Cys).

It belongs to the LarE family.

It catalyses the reaction pyridinium-3,5-dicarboxylate mononucleotide + [LarE protein]-L-cysteine + ATP = [LarE protein]-dehydroalanine + pyridinium-3-carboxylate-5-thiocarboxylate mononucleotide + AMP + diphosphate + H(+). It carries out the reaction [LarE protein]-L-cysteine + pyridinium-3-carboxylate-5-thiocarboxylate mononucleotide + ATP = pyridinium-3,5-bisthiocarboxylate mononucleotide + [LarE protein]-dehydroalanine + AMP + diphosphate + H(+). Its function is as follows. Involved in the biosynthesis of a nickel-pincer cofactor ((SCS)Ni(II) pincer complex). Catalyzes the ATP-dependent incorporation of two sulfur atoms in pyridinium-3,5-biscarboxylic acid mononucleotide (P2CMN) to yield pyridinium-3,5-bisthiocarboxylic acid mononucleotide (P2TMN). The source of sulfur is the enzyme itself: Cys-176 of LarE is the sulfur donor, thereby being converted into dehydroalanine, and is not regenerated in vivo. Thus, two molecules of LarE undergo sacrificial sulfur transfer to create one P2TMN. Binds nickel. Is required for the activation of the lactate racemase LarA. May also be involved in the activation of other nickel-pincer cofactor-dependent enzymes. This is Pyridinium-3,5-bisthiocarboxylic acid mononucleotide synthase from Lactiplantibacillus plantarum (strain ATCC BAA-793 / NCIMB 8826 / WCFS1) (Lactobacillus plantarum).